Consider the following 330-residue polypeptide: Probable UDP-3-O-acylglucosamine N-acyltransferase 1, mitochondrial (330 aa).

The N-terminal 52 residues, methionine 1–serine 52, are a transit peptide targeting the mitochondrion. UDP-N-acetyl-alpha-D-glucosamine is bound at residue phenylalanine 160–phenylalanine 162. Aspartate 210 and glutamine 214 together coordinate hexadecanoate. The active-site Proton acceptor is the histidine 217. UDP-N-acetyl-alpha-D-glucosamine-binding residues include asparagine 218, serine 236, and histidine 254.

It belongs to the transferase hexapeptide repeat family. LpxD subfamily. Homotrimer.

Its subcellular location is the mitochondrion. It carries out the reaction a UDP-3-O-[(3R)-3-hydroxyacyl]-alpha-D-glucosamine + a (3R)-hydroxyacyl-[ACP] = a UDP-2-N,3-O-bis[(3R)-3-hydroxyacyl]-alpha-D-glucosamine + holo-[ACP] + H(+). It participates in glycolipid biosynthesis; lipid IV(A) biosynthesis; lipid IV(A) from (3R)-3-hydroxytetradecanoyl-[acyl-carrier-protein] and UDP-N-acetyl-alpha-D-glucosamine: step 3/6. Functionally, involved in the biosynthesis of lipid A, a phosphorylated glycolipid that in bacteria anchors the lipopolysaccharide to the outer membrane of the cell. Lipid A-like molecules in plants may serve as structural components of the outer membranes of mitochondria and/or chloroplasts, or may be involved in signal transduction or plant defense responses. The polypeptide is Probable UDP-3-O-acylglucosamine N-acyltransferase 1, mitochondrial (LPXD1) (Arabidopsis thaliana (Mouse-ear cress)).